The primary structure comprises 275 residues: 3-methyl-2-oxobutanoate hydroxymethyltransferase (275 aa).

Residues D49 and D88 each coordinate Mg(2+). 3-methyl-2-oxobutanoate-binding positions include D49–S50, D88, and K118. E120 contributes to the Mg(2+) binding site. E187 acts as the Proton acceptor in catalysis.

Belongs to the PanB family. Homodecamer; pentamer of dimers. Mg(2+) serves as cofactor.

The protein localises to the cytoplasm. The catalysed reaction is 3-methyl-2-oxobutanoate + (6R)-5,10-methylene-5,6,7,8-tetrahydrofolate + H2O = 2-dehydropantoate + (6S)-5,6,7,8-tetrahydrofolate. The protein operates within cofactor biosynthesis; (R)-pantothenate biosynthesis; (R)-pantoate from 3-methyl-2-oxobutanoate: step 1/2. Its function is as follows. Catalyzes the reversible reaction in which hydroxymethyl group from 5,10-methylenetetrahydrofolate is transferred onto alpha-ketoisovalerate to form ketopantoate. The protein is 3-methyl-2-oxobutanoate hydroxymethyltransferase of Brucella melitensis biotype 1 (strain ATCC 23456 / CCUG 17765 / NCTC 10094 / 16M).